We begin with the raw amino-acid sequence, 295 residues long: Glutamyl-Q tRNA(Asp) synthetase (295 aa).

L-glutamate contacts are provided by residues arginine 5–serine 9 and glutamate 41. Positions proline 8–serine 18 match the 'HIGH' region motif. Zn(2+)-binding residues include cysteine 97, cysteine 99, tyrosine 117, and cysteine 121. Tyrosine 178 and arginine 196 together coordinate L-glutamate. A 'KMSKS' region motif is present at residues lysine 234–glutamine 238. Residue lysine 237 coordinates ATP.

This sequence belongs to the class-I aminoacyl-tRNA synthetase family. GluQ subfamily. Zn(2+) serves as cofactor.

Functionally, catalyzes the tRNA-independent activation of glutamate in presence of ATP and the subsequent transfer of glutamate onto a tRNA(Asp). Glutamate is transferred on the 2-amino-5-(4,5-dihydroxy-2-cyclopenten-1-yl) moiety of the queuosine in the wobble position of the QUC anticodon. This chain is Glutamyl-Q tRNA(Asp) synthetase, found in Neisseria meningitidis serogroup B (strain ATCC BAA-335 / MC58).